The chain runs to 508 residues: Photosystem II CP47 reaction center protein (508 aa).

The next 6 helical transmembrane spans lie at 21 to 36 (AVHI…WAGS), 101 to 115 (IVFS…IWHW), 140 to 156 (GIHL…FGAF), 203 to 218 (IAAG…FHLS), 237 to 252 (VLSS…AFIV), and 457 to 472 (TFAL…HGAR).

It belongs to the PsbB/PsbC family. PsbB subfamily. As to quaternary structure, PSII is composed of 1 copy each of membrane proteins PsbA, PsbB, PsbC, PsbD, PsbE, PsbF, PsbH, PsbI, PsbJ, PsbK, PsbL, PsbM, PsbT, PsbX, PsbY, PsbZ, Psb30/Ycf12, at least 3 peripheral proteins of the oxygen-evolving complex and a large number of cofactors. It forms dimeric complexes. Binds multiple chlorophylls. PSII binds additional chlorophylls, carotenoids and specific lipids. is required as a cofactor.

The protein resides in the plastid. Its subcellular location is the chloroplast thylakoid membrane. In terms of biological role, one of the components of the core complex of photosystem II (PSII). It binds chlorophyll and helps catalyze the primary light-induced photochemical processes of PSII. PSII is a light-driven water:plastoquinone oxidoreductase, using light energy to abstract electrons from H(2)O, generating O(2) and a proton gradient subsequently used for ATP formation. The sequence is that of Photosystem II CP47 reaction center protein from Gnetum parvifolium (Small-leaved jointfir).